A 271-amino-acid chain; its full sequence is MLNSPGTRRPVKEAQKYGEDSQKSHSPGTPGPRSSVTTLSASALSDSSSPDTPPRRGPGRPSTPARAPATSAPMMYSRRGVRRTARPAGADTRSSANQLPQPSGACANADSAPPADVSACLRRRSHGDRCVPRSRRRPRPRPRASTAFFQEEGPCGACPGALRPQAGASFRELRGLPPPRPREREQSPPLGAAPSSALSHQGWKNTRCATRGLVNTLVNTGHFLYLQPPAPLIMPYLDDAEVPGNRRSHPSLSFSWLSKALYHVTFLLRIL.

The tract at residues 1–202 is disordered; it reads MLNSPGTRRP…APSSALSHQG (202 aa). Residues 10–23 show a composition bias toward basic and acidic residues; sequence PVKEAQKYGEDSQK. Low complexity-rich tracts occupy residues 33 to 50 and 59 to 73; these read RSSV…SSSP and GRPS…TSAP. The span at 92–101 shows a compositional bias: polar residues; it reads TRSSANQLPQ. The span at 121 to 142 shows a compositional bias: basic residues; the sequence is LRRRSHGDRCVPRSRRRPRPRP.

This is an uncharacterized protein from Homo sapiens (Human).